The chain runs to 689 residues: Glycine--tRNA ligase beta subunit (689 aa).

It belongs to the class-II aminoacyl-tRNA synthetase family. In terms of assembly, tetramer of two alpha and two beta subunits.

The protein resides in the cytoplasm. It catalyses the reaction tRNA(Gly) + glycine + ATP = glycyl-tRNA(Gly) + AMP + diphosphate. The protein is Glycine--tRNA ligase beta subunit of Salmonella dublin (strain CT_02021853).